We begin with the raw amino-acid sequence, 214 residues long: MSKPPPKPVKPGQVKVFRALYTFEPRTPDELYFEEGDIIYITDMSDTSWWKGTCKGRTGLIPSNYVAEQAESIDNPLHEAAKRGNLSWLRECLDNRVGVNGLDKAGSTALYWACHGGHKDIVEVLFTQPNVELNQQNKLGDTALHAAAWKGYADIVQLLLAKGARTDLRNNEKKLALDMATNAACASLLKKKQATDGARTLSNAEDYLDDEDSD.

Position 2 is an N-acetylserine (S2). The 60-residue stretch at 12-71 (GQVKVFRALYTFEPRTPDELYFEEGDIIYITDMSDTSWWKGTCKGRTGLIPSNYVAEQAE) folds into the SH3 domain. 3 ANK repeats span residues 72–101 (SIDNPLHEAAKRGNLSWLRECLDNRVGVNG), 105–135 (AGSTALYWACHGGHKDIVEVLFTQPNVELNQ), and 139–168 (LGDTALHAAAWKGYADIVQLLLAKGARTDL). At T200 the chain carries Phosphothreonine. Residues S202 and S213 each carry the phosphoserine modification.

As to quaternary structure, interacts with SRC and SMN1. Interacts with FASLG.

The protein localises to the cytoplasm. In terms of biological role, induces bone resorption, acting probably through a signaling cascade which results in the secretion of factor(s) enhancing osteoclast formation and activity. The chain is Osteoclast-stimulating factor 1 (Ostf1) from Rattus norvegicus (Rat).